A 160-amino-acid chain; its full sequence is uncharacterized protein (160 aa).

Residues 1-33 (MPLRPCRHHQGFLPKKQWRAKFPQLIVLMGRVA) are Extracellular-facing. The chain crosses the membrane as a helical span at residues 34-54 (AEELLPAVAVAAVVVAVVVAV). Residues 55–68 (ERVVPLLFVHRPDS) lie on the Cytoplasmic side of the membrane. The chain crosses the membrane as a helical span at residues 69 to 89 (FFLIFFFQSCFVCCCCCCSCS). Over 90 to 119 (TSLKAYSSEKEKQKYGKRGNGNTPLVQRLV) the chain is Extracellular. Residues 120 to 140 (TLSYLALLILVLSIELLTWFV) form a helical membrane-spanning segment. Topologically, residues 141–160 (KKQRTGNKKQKDKEKNALLL) are cytoplasmic.

The protein resides in the membrane. This is an uncharacterized protein from Saccharomyces cerevisiae (strain ATCC 204508 / S288c) (Baker's yeast).